We begin with the raw amino-acid sequence, 886 residues long: Isoleucine--tRNA ligase (886 aa).

The short motif at 60-70 (PYANGDIHIGH) is the 'HIGH' region element. Residue Glu546 coordinates L-isoleucyl-5'-AMP. A 'KMSKS' region motif is present at residues 587–591 (KMSKS). Lys590 contacts ATP. Zn(2+) is bound by residues Cys856, Cys859, Cys870, and Cys873.

Belongs to the class-I aminoacyl-tRNA synthetase family. IleS type 1 subfamily. As to quaternary structure, monomer. It depends on Zn(2+) as a cofactor.

The protein resides in the cytoplasm. The catalysed reaction is tRNA(Ile) + L-isoleucine + ATP = L-isoleucyl-tRNA(Ile) + AMP + diphosphate. Catalyzes the attachment of isoleucine to tRNA(Ile). As IleRS can inadvertently accommodate and process structurally similar amino acids such as valine, to avoid such errors it has two additional distinct tRNA(Ile)-dependent editing activities. One activity is designated as 'pretransfer' editing and involves the hydrolysis of activated Val-AMP. The other activity is designated 'posttransfer' editing and involves deacylation of mischarged Val-tRNA(Ile). This chain is Isoleucine--tRNA ligase, found in Mesomycoplasma hyopneumoniae (strain J / ATCC 25934 / NCTC 10110) (Mycoplasma hyopneumoniae).